The primary structure comprises 276 residues: MEEQPLCTLSVKDLMEAGAHFGHQTRRWNPKMKLYIFEEKNGLYIINLAKTLYQLRNALPHVCKVIKENKPILFVGTKKQAKCVIKEAAIEAGEYFVAERWLGGMLTNMATIRNSIKTLDKIEKDLTQNSSCLTKKEIALLAKRHQKLLKNLEGIRYLRKIPGLVIVVDPSYEKIAVAEAKKLGIPVLALVDTNCDPTPIDYVVPCNDDSLKSIRLIISAIKDNIINTKKKLGVEIVSPIKTLSTEDGSEEIDIAAGDDNRKEDLLAKKYDSNEAN.

The protein belongs to the universal ribosomal protein uS2 family.

The chain is Small ribosomal subunit protein uS2 from Chlamydia caviae (strain ATCC VR-813 / DSM 19441 / 03DC25 / GPIC) (Chlamydophila caviae).